We begin with the raw amino-acid sequence, 491 residues long: MATFKDACYHYRRLNKLNNLVLKLGANDEWRPAPVTKYKGWCLDCCQHTNLTYCRGCALYHVCQWCSQYNRCFLDEEPHLLRMRTFKNVMTKEDIEGLLTMYETLFPINEKLVNKFTDFVKQRKCRNEYLLEWYNHLLMPITLQALTVKLEDNIYYICGYYDCMEHENQTPLQFINLLEKYDKLLLDDRNFNRMSYLPTILQQEYALRYFSKSRFFSKKEKRLSRNDFSDNLMEDRHSPISLIQVIRNCISTHMNDSEWNKACTLVVDPKNYIDIINSSYTEHYSVSQRCKLFTKYKLGIVSKLVRPNYIFSSHESCALNVHNCKWCQTNNHYKVWADFRLKKIYNNMMDFVRALTKSNGNVGHCSSQESESKCIPDIFLICEMEKWNGPVRVLFRYLEPVDINGEEYVLLDYEVNWEVRGLIIQNMDGRVPRILNMDDVKKILSAIIFDWFDVRYMRETPLTTLTTNQLRALNRKNELIDEYDLELSDVE.

The segment at 1 to 81 (MATFKDACYH…CFLDEEPHLL (81 aa)) is RNA-binding. Positions 42 to 79 (CLDCCQHTNLTYCRGCALYHVCQWCSQYNRCFLDEEPH) are zinc-binding domain. Positions 82-176 (RMRTFKNVMT…ENQTPLQFIN (95 aa)) are important for cytoskeleton localization. Positions 320–491 (NVHNCKWCQT…EYDLELSDVE (172 aa)) are interaction with host IRF3. The short motif at 485 to 488 (LELS) is the pLxIS motif element.

It belongs to the rotavirus NSP1 family. As to quaternary structure, interacts (via C-terminus) with host IRF3; this interaction leads to IRF3 degradation. Interacts with host IRF7; this interaction leads to IRF7 degradation. Interacts with host CUL1 and CUL3.

It localises to the host cytoplasm. The protein resides in the host cytoskeleton. Its function is as follows. Plays a role in the inhibition of host innate immunity by inducing the degradation of key host factors required to activate interferon production such as IRF3, IRF5 or IRF7. Associates with components of cullin RING ligases (CRLs) including CUL1 or CUL3, which are essential multisubunit ubiquitination complexes, to modulate their activities. The polypeptide is Non-structural protein 1 (Rotavirus A (strain RVA/Human/Japan/AU-1/1982/G3P3[9]) (RV-A)).